Here is a 50-residue protein sequence, read N- to C-terminus: Defensin-like protein 1 (50 aa).

4 disulfides stabilise this stretch: Cys2-Cys50, Cys14-Cys35, Cys20-Cys44, and Cys24-Cys46.

Belongs to the DEFL family.

It localises to the secreted. Its function is as follows. Possesses antimicrobial activity sensitive to inorganic cations. Binds specifically to the fungal plasma membrane. Has no inhibitory effect on insect gut alpha-amylase. The polypeptide is Defensin-like protein 1 (Aesculus hippocastanum (Horse chestnut)).